A 457-amino-acid polypeptide reads, in one-letter code: Acetylcholine receptor subunit alpha-1-B (457 aa).

The N-terminal stretch at 1–20 is a signal peptide; that stretch reads MDYTASCLIFLFIAAGTVFG. Over 21–230 the chain is Extracellular; it reads TDHETRLIGD…ITYHFVLQRL (210 aa). Intrachain disulfides connect Cys148–Cys162 and Cys212–Cys213. A glycan (N-linked (GlcNAc...) asparagine) is linked at Asn161. 3 consecutive transmembrane segments (helical) span residues 231–255, 263–281, and 297–316; these read PLYF…VFYL, MTLS…LVIV, and YMLF…VIVI. Topologically, residues 317–428 are cytoplasmic; it reads NTHHRSPSTH…WKFVAMVLDH (112 aa). The helical transmembrane segment at 429-447 threads the bilayer; it reads ILLAVFMTVCVIGTLAVFA.

It belongs to the ligand-gated ion channel (TC 1.A.9) family. Acetylcholine receptor (TC 1.A.9.1) subfamily. Alpha-1/CHRNA1 sub-subfamily. In terms of assembly, one of the alpha chains that assemble within the acetylcholine receptor, a pentamer of two alpha chains, a beta, a delta, and a gamma or epsilon chains.

It localises to the postsynaptic cell membrane. Its subcellular location is the cell membrane. The catalysed reaction is K(+)(in) = K(+)(out). It catalyses the reaction Na(+)(in) = Na(+)(out). Functionally, upon acetylcholine binding, the AChR responds by an extensive change in conformation that affects all subunits and leads to opening of an ion-conducting channel across the plasma membrane. This chain is Acetylcholine receptor subunit alpha-1-B (chrna1-b), found in Xenopus laevis (African clawed frog).